Here is a 264-residue protein sequence, read N- to C-terminus: Tritrans,polycis-undecaprenyl-diphosphate synthase (geranylgeranyl-diphosphate specific) (264 aa).

Residue D43 is part of the active site. D43 lines the Mg(2+) pocket. Substrate contacts are provided by residues 44-47, W48, H60, and 88-90; these read GNRR and STE. Catalysis depends on N91, which acts as the Proton acceptor. Substrate contacts are provided by residues F92, R94, R213, and 219-221; that span reads RIS. E232 is a Mg(2+) binding site.

Belongs to the UPP synthase family. Homodimer. Requires Mg(2+) as cofactor.

The enzyme catalyses geranylgeranyl diphosphate + 7 isopentenyl diphosphate = tri-trans,hepta-cis-undecaprenyl diphosphate + 7 diphosphate. Catalyzes the sequential condensation of isopentenyl diphosphate (IPP) with geranylgeranyl diphosphate (GGPP) to yield (2Z,6Z,10Z,14Z,18Z,22Z,26Z,30E,34E,38E)-undecaprenyl diphosphate (tritrans,heptacis-UPP). It is probably the precursor of glycosyl carrier lipids. This Pyrococcus horikoshii (strain ATCC 700860 / DSM 12428 / JCM 9974 / NBRC 100139 / OT-3) protein is Tritrans,polycis-undecaprenyl-diphosphate synthase (geranylgeranyl-diphosphate specific).